The chain runs to 315 residues: Glucokinase-like protein CC_3167 (315 aa).

This sequence belongs to the bacterial glucokinase family.

In Caulobacter vibrioides (strain ATCC 19089 / CIP 103742 / CB 15) (Caulobacter crescentus), this protein is Glucokinase-like protein CC_3167.